The sequence spans 92 residues: uncharacterized protein (92 aa).

This is an uncharacterized protein from Pasteurella multocida (strain Pm70).